We begin with the raw amino-acid sequence, 308 residues long: Ribonuclease H2 subunit B (308 aa).

A2 is subject to N-acetylalanine. K292 carries the post-translational modification N6-acetyllysine. Phosphoserine is present on S293.

The protein belongs to the RNase H2 subunit B family. As to quaternary structure, the RNase H2 complex is a heterotrimer composed of the catalytic subunit RNASEH2A and the non-catalytic subunits RNASEH2B and RNASEH2C.

The protein resides in the nucleus. In terms of biological role, non catalytic subunit of RNase H2, an endonuclease that specifically degrades the RNA of RNA:DNA hybrids. Participates in DNA replication, possibly by mediating the removal of lagging-strand Okazaki fragment RNA primers during DNA replication. Mediates the excision of single ribonucleotides from DNA:RNA duplexes. The sequence is that of Ribonuclease H2 subunit B (Rnaseh2b) from Mus musculus (Mouse).